The sequence spans 557 residues: Protein PNS1 (557 aa).

Residues 1-58 (MSTEKQYQPQQPPPAYTGQGPDNGNAYGYPESYGKTETHSGDSCSGDTSMNPQQQGQQ) are disordered. The Cytoplasmic segment spans residues 1–99 (MSTEKQYQPQ…DNNKPKFNDW (99 aa)). A compositionally biased stretch (polar residues) spans 41–58 (GDSCSGDTSMNPQQQGQQ). A helical transmembrane segment spans residues 100–120 (PFIIVFLLTLCGFIVVASLTL). Topologically, residues 121-147 (RAWSQTYSSTGSGIYHDFDTGTLNTNS) are extracellular. The chain crosses the membrane as a helical span at residues 148–168 (VILLVFSVVIAIFFAFIGIVL). Residues 169–174 (CRAYPK) lie on the Cytoplasmic side of the membrane. Residues 175 to 195 (FFIYAGMIVNILAALGTAIMY) form a helical membrane-spanning segment. The Extracellular portion of the chain corresponds to 196–200 (MSLKY). A helical transmembrane segment spans residues 201 to 221 (WSAGIVFLIFTFMTAWCYWGM). The Cytoplasmic portion of the chain corresponds to 222–246 (RSRIPLTVAILRVIVLAMKNCPQSL). Residues 247 to 267 (FVSFFGTIVASAFAMLFSTVV) traverse the membrane as a helical segment. The Extracellular portion of the chain corresponds to 268 to 292 (VATYMKYDPSNTNSGCNVSGGDCSH). Asn-284 carries N-linked (GlcNAc...) asparagine glycosylation. Residues 293–313 (AKLIGVLVVVFFCGYYISEVI) form a helical membrane-spanning segment. Over 314–350 (RNVMHCTVSGVFGSWYYRYKSDQGMPKWPAMGAFKRA) the chain is Cytoplasmic. A helical transmembrane segment spans residues 351-371 (MTYSFGSICFGSLIVSIIETF). Topologically, residues 372–393 (RQLLQLGKQAAIASTDNANWIR) are extracellular. Residues 394–414 (IIFWLIDMLVGFIQWIAQYFN) form a helical membrane-spanning segment. The Cytoplasmic segment spans residues 415-454 (HYAYCIIALYGKPYLKAAKQTWYMFREKGIDALINDNLVN). Residues 455–475 (VALGFYSLFASYMSCLFAFLY) traverse the membrane as a helical segment. The Extracellular portion of the chain corresponds to 476–488 (LRFTKPGYNSDGD). The chain crosses the membrane as a helical span at residues 489–509 (FNAPLMAFAFVIALQLTNIAN). Residues 510–557 (ETIRSGCATFFTALGHDPEVFQAQYPDRFDEIFRSYPQVLNKLTHQDV) lie on the Cytoplasmic side of the membrane.

Belongs to the CTL (choline transporter-like) family.

Its subcellular location is the cell membrane. Functionally, probably involved in transport through the plasma membrane. The sequence is that of Protein PNS1 (PNS1) from Candida glabrata (strain ATCC 2001 / BCRC 20586 / JCM 3761 / NBRC 0622 / NRRL Y-65 / CBS 138) (Yeast).